Reading from the N-terminus, the 682-residue chain is Nephrocystin-1-like protein (682 aa).

Positions leucine 10 to serine 100 form a coiled coil. The disordered stretch occupies residues lysine 96–arginine 188. The span at asparagine 128 to leucine 148 shows a compositional bias: acidic residues. An SH3 domain is found at valine 215–glutamate 275.

This sequence belongs to the nephrocystin-1 family. Expressed in ciliated sensory neurons of the head (amphid neurons) and the tail in hermaphrodites (phasmid neurons) and males (sensory ray neurons).

Functionally, plays a role in the extension of dendrites from phasmid ciliated sensory neurons. May be necessary for initial assembly of the cilium. This is Nephrocystin-1-like protein from Caenorhabditis elegans.